Consider the following 272-residue polypeptide: MVLLTAVLLLLAAYAGPAQSLGSFVHCEPCDEKALSMCPPSPLGCELVKEPGCGCCMTCALAEGQSCGVYTERCAQGLRCLPRQDEEKPLHALLHGRGVCLNEKSYREQVKIERDSREHEEPTTSEMAEETYSPKIFRPKHTRISELKAEAVKKDRRKKLTQSKFVGGAENTAHPRIISAPEMRQESEQGPCRRHMEASLQELKASPRMVPRAVYLPNCDRKGFYKRKQCKPSRGRKRGICWCVDKYGMKLPGMEYVDGDFQCHTFDSSNVE.

Positions Met1–Ser20 are cleaved as a signal peptide. The 81-residue stretch at Ser23–Glu103 folds into the IGFBP N-terminal domain. Cystine bridges form between Cys27–Cys53, Cys30–Cys55, Cys38–Cys56, Cys45–Cys59, Cys67–Cys80, and Cys74–Cys100. The span at Lys111–Pro122 shows a compositional bias: basic and acidic residues. A disordered region spans residues Lys111–Glu130. Ser116 is subject to Phosphoserine; by FAM20C. The O-linked (HexNAc...) threonine glycan is linked to Thr172. Residues Gln189–Cys263 form the Thyroglobulin type-1 domain. Cystine bridges form between Cys192–Cys219, Cys230–Cys241, and Cys243–Cys263.

Interacts with IGF1; this interaction enhances the growth stimulatory effects of IGF1 on fibroblasts. Interacts with CAV1; this interaction allows trafficking of IGFBP5 from the plasma membrane to the nucleus. Interacts with NCL; this interaction is necessary for IGFBP5 localization to the nucleus. In terms of processing, cleaved by C1S in extracellular space. As to expression, osteosarcoma, and at lower levels in liver, kidney and brain.

The protein localises to the secreted. It localises to the cytoplasm. It is found in the nucleus. Multifunctional protein that plays a critical role in regulating the availability of IGFs to their receptors and thereby regulates IGF-mediated cellular processes including proliferation, differentiation, and apoptosis in a cell-type specific manner. Increases the cell proliferation of osteoblasts, intestinal smooth muscle cells and neuroblastoma cells. Enhances adhesion and survival of epithelial cells but decreases adhesion of mesenchymal cells. Once secreted, acts as a major mediator of mTORC1-dependent feedback inhibition of IGF1 signaling. Also plays a role in the induction of extracellular matrix (ECM) production and deposition independently of its nuclear translocation and binding to IGFs. Acts itself as a growth factor that can act independently of IGFs to regulate bone formation. Acts as a ligand for the ROR1 receptor which triggers formation of ROR1/HER2 heterodimer to enhance CREB oncogenic signaling. The chain is Insulin-like growth factor-binding protein 5 (IGFBP5) from Homo sapiens (Human).